A 154-amino-acid chain; its full sequence is Large ribosomal subunit protein uL23 (154 aa).

Belongs to the universal ribosomal protein uL23 family.

Functionally, this protein binds to a specific region on the 26S rRNA. This chain is Large ribosomal subunit protein uL23 (RPL23A), found in Daucus carota (Wild carrot).